A 393-amino-acid chain; its full sequence is Zinc finger CCHC domain-containing protein 18 (393 aa).

2 disordered regions span residues 281–300 (VEPEDPPLSSPGASSLRGTA) and 313–341 (DDFDEESPSTSSGSGQRNNGPGDLGRTRK). 2 stretches are compositionally biased toward polar residues: residues 291-300 (PGASSLRGTA) and 320-331 (PSTSSGSGQRNN). The CCHC-type zinc-finger motif lies at 346-363 (IRCPHCGEEGHAKETCDN).

This sequence belongs to the ZCCHC12 family.

The chain is Zinc finger CCHC domain-containing protein 18 from Mus musculus (Mouse).